The primary structure comprises 449 residues: MGRLERQLMEAYIRQKRASPGMVQASDLQINRPMSGMRSNSRELHAYDGPMQFISSPQNPDQILSNGSPGGIAPATINTSRNHSNNMRSLSTINQEADLIEEISSHELEDEESSPVTVIEQHSAVHSANSTQSQRPRPRQHSFSDTLDEDDYTNRNVAAAAPVRPAGVPSSPYKEATLDGSSNGTGNGTGGESEGDVIGNIDQFVMQPAPQGVLYKCRITRDRKGMDRGLFPIYYLHLERDYGKKIFLLGGRKRKKSKTSNYIVSCDPTDLSRNADGFCGKLRSNVFGTSFTVFDNGNKESTESPRLDLAVIIYDTNILGFKGPRNMTVILPGMTEDDQRVKISSADPKQQGILDLWKMKNMDNIVELHNKTPVWNDETQSYVLNFHGRVTQASVKNFQLVHDSDPEYIVMQFGRTSEDVFTMDYRYPLCAMQAFAIALSSFDGKIACE.

The disordered stretch occupies residues 123 to 197 (SAVHSANSTQ…GTGGESEGDV (75 aa)). Residues 124–145 (AVHSANSTQSQRPRPRQHSFSD) are compositionally biased toward polar residues. Residue Ser-142 is modified to Phosphoserine. Residues 154–166 (NRNVAAAAPVRPA) are compositionally biased toward low complexity. Residues 183 to 192 (NGTGNGTGGE) are compositionally biased toward gly residues.

The protein belongs to the TUB family.

The protein resides in the cytoplasm. The protein localises to the nucleus. Its subcellular location is the cell projection. It is found in the cilium membrane. It localises to the rhabdomere. This chain is Protein king tubby, found in Drosophila ananassae (Fruit fly).